The primary structure comprises 566 residues: MPNPKPLPPQSELDNIRRYNAQAIANYYRRRPWKVLWRALEVVWSFGFFLTCLLWDQWTGQVEYYKRQRAEDLRELLTKLGPTFIKVGQALSTRPDLVRRDFLEELIKLQDQLPPFDNDLAFQLMEEQLGMKVDEAYREISAHPVAAASLGQVYRAMLFSGEEVAVKVQRPNLRPRLSLDLYLMRLGAQKFGRFLPLNLGHDLTLIVDEFGIKLFEEIDYLNEGRNAEKFAENFHGDAEVKVPCIYWQYSNQKVLTLEWIQGFKLTDTDKIRAAGLDPSDIIRIGVTSGLRQLLEHGFFHADPHPGNLFATLDGRMAYIDFGMMDQLEPGTKETIASSIVQLINKDYLALTEDFIALGFLAPNTDITPIIPALENVFGSAIGQSVQDFNFKTITDDFSELMYDYPFRVPAKFALIIRSLVTQEGLALSLDPNFKIVEVAYPYVARRLLTGESPQLRRQLIDVLFKNGKFQWQRLENMLSIARSDTKFDLLPTAQLGLQFLFSEEGLYLRRQILLALTEDDRLHTDEVQRIWGLVKDDFKPQELVNVAWNAVREFSLAGVSTILPQR.

It belongs to the protein kinase superfamily. ADCK protein kinase family.

This is an uncharacterized protein from Synechocystis sp. (strain ATCC 27184 / PCC 6803 / Kazusa).